Here is a 316-residue protein sequence, read N- to C-terminus: HPr kinase/phosphorylase (316 aa).

Catalysis depends on residues His143 and Lys164. ATP is bound at residue 158-165 (GEAGSGKS). Mg(2+) is bound at residue Ser165. Asp182 (proton acceptor; for phosphorylation activity. Proton donor; for dephosphorylation activity) is an active-site residue. Positions 206–215 (LEVRGLGVLN) are important for the catalytic mechanism of both phosphorylation and dephosphorylation. Glu207 contacts Mg(2+). Arg251 is a catalytic residue. The tract at residues 272-277 (PVMPGR) is important for the catalytic mechanism of dephosphorylation.

It belongs to the HPrK/P family. In terms of assembly, homohexamer. Mg(2+) serves as cofactor.

The catalysed reaction is [HPr protein]-L-serine + ATP = [HPr protein]-O-phospho-L-serine + ADP + H(+). The enzyme catalyses [HPr protein]-O-phospho-L-serine + phosphate + H(+) = [HPr protein]-L-serine + diphosphate. Catalyzes the ATP- as well as the pyrophosphate-dependent phosphorylation of a specific serine residue in HPr, a phosphocarrier protein of the phosphoenolpyruvate-dependent sugar phosphotransferase system (PTS). HprK/P also catalyzes the pyrophosphate-producing, inorganic phosphate-dependent dephosphorylation (phosphorolysis) of seryl-phosphorylated HPr (P-Ser-HPr). In Stenotrophomonas maltophilia (strain K279a), this protein is HPr kinase/phosphorylase.